The following is a 374-amino-acid chain: Agmatine deiminase (374 aa).

Agmatine-binding residues include aspartate 220 and aspartate 226. The active-site Amidino-cysteine intermediate is cysteine 366.

The protein belongs to the agmatine deiminase family. Forms homodimers.

It catalyses the reaction agmatine + H2O = N-carbamoylputrescine + NH4(+). It participates in amine and polyamine biosynthesis; putrescine biosynthesis via agmatine pathway; N-carbamoylputrescine from agmatine: step 1/1. Functionally, mediates the hydrolysis of agmatine into N-carbamoylputrescine in the arginine decarboxylase (ADC) pathway of putrescine biosynthesis, a basic polyamine. This chain is Agmatine deiminase, found in Medicago truncatula (Barrel medic).